The following is a 296-amino-acid chain: Light-independent protochlorophyllide reductase iron-sulfur ATP-binding protein (296 aa).

Over residues 1 to 11 (MTSTITRKEDG) the composition is skewed to basic and acidic residues. A disordered region spans residues 1–20 (MTSTITRKEDGEGSVQVKQD). Residues 39–44 (GIGKST) and Lys-68 contribute to the ATP site. Residue Ser-43 participates in Mg(2+) binding. [4Fe-4S] cluster contacts are provided by Cys-124 and Cys-158. 209 to 210 (NR) contributes to the ATP binding site.

The protein belongs to the NifH/BchL/ChlL family. As to quaternary structure, homodimer. Protochlorophyllide reductase is composed of three subunits; ChlL, ChlN and ChlB. [4Fe-4S] cluster serves as cofactor.

The catalysed reaction is chlorophyllide a + oxidized 2[4Fe-4S]-[ferredoxin] + 2 ADP + 2 phosphate = protochlorophyllide a + reduced 2[4Fe-4S]-[ferredoxin] + 2 ATP + 2 H2O. It functions in the pathway porphyrin-containing compound metabolism; chlorophyll biosynthesis (light-independent). Component of the dark-operative protochlorophyllide reductase (DPOR) that uses Mg-ATP and reduced ferredoxin to reduce ring D of protochlorophyllide (Pchlide) to form chlorophyllide a (Chlide). This reaction is light-independent. The L component serves as a unique electron donor to the NB-component of the complex, and binds Mg-ATP. This chain is Light-independent protochlorophyllide reductase iron-sulfur ATP-binding protein, found in Prochlorococcus marinus (strain NATL1A).